The sequence spans 257 residues: Thioredoxin-dependent peroxide reductase, mitochondrial (257 aa).

The transit peptide at 1–62 directs the protein to the mitochondrion; the sequence is MAATAGRLFR…FAFSTSSSYH (62 aa). In terms of domain architecture, Thioredoxin spans 64 to 222; it reads PAVTQHAPYF…TLRLVKAFQF (159 aa). The residue at position 84 (Lys-84) is an N6-succinyllysine. Lys-92 bears the N6-acetyllysine; alternate mark. Position 92 is an N6-succinyllysine; alternate (Lys-92). Cys-109 functions as the Cysteine sulfenic acid (-SOH) intermediate in the catalytic mechanism. Thr-147 bears the Phosphothreonine mark.

The protein belongs to the peroxiredoxin family. AhpC/Prx1 subfamily. In terms of assembly, homodimer; disulfide-linked, upon oxidation. 6 homodimers assemble to form a ring-like dodecamer. Interacts with NEK6. Interacts with LRRK2. Interacts with MAP3K13. Interacts with RPS6KC1 (via PX domain). Phosphorylated by LRRK2; phosphorylation reduces perodixase activity. Post-translationally, the enzyme can be inactivated by further oxidation of the cysteine sulfenic acid (C(P)-SOH) to sulphinic acid (C(P)-SO2H) and sulphonic acid (C(P)-SO3H) instead of its condensation to a disulfide bond. In terms of processing, S-palmitoylated. In terms of tissue distribution, predominantly expressed in adrenal cortex. Also detected in liver, renal cortex and medulla, and adrenal medulla (at protein level).

It localises to the mitochondrion matrix. Its subcellular location is the cytoplasm. It is found in the early endosome. It catalyses the reaction a hydroperoxide + [thioredoxin]-dithiol = an alcohol + [thioredoxin]-disulfide + H2O. Functionally, thiol-specific peroxidase that catalyzes the reduction of hydrogen peroxide and organic hydroperoxides to water and alcohols, respectively. Plays a role in cell protection against oxidative stress by detoxifying peroxides. Acts synergistically with MAP3K13 to regulate the activation of NF-kappa-B in the cytosol. Required for the maintenance of physical strength. This is Thioredoxin-dependent peroxide reductase, mitochondrial (PRDX3) from Bos taurus (Bovine).